We begin with the raw amino-acid sequence, 131 residues long: Ribosome-binding factor A (131 aa).

This sequence belongs to the RbfA family. Monomer. Binds 30S ribosomal subunits, but not 50S ribosomal subunits or 70S ribosomes.

It is found in the cytoplasm. One of several proteins that assist in the late maturation steps of the functional core of the 30S ribosomal subunit. Associates with free 30S ribosomal subunits (but not with 30S subunits that are part of 70S ribosomes or polysomes). Required for efficient processing of 16S rRNA. May interact with the 5'-terminal helix region of 16S rRNA. This chain is Ribosome-binding factor A, found in Protochlamydia amoebophila (strain UWE25).